The following is a 792-amino-acid chain: Zinc finger protein 606 (792 aa).

Residues 62 to 133 (VTFKDVAVDF…EQACPQRTCP (72 aa)) form the KRAB domain. The C2H2-type 1; degenerate zinc-finger motif lies at 289–311 (FKCTDAVKSFNHIIHFGDHKGIH). The segment at 317–344 (YEYKECHQIFNQSPSFNEHPRLHVGENQ) adopts a C2H2-type 2; degenerate zinc-finger fold. The C2H2-type 3; degenerate zinc-finger motif lies at 400–422 (YDYNECGTSFIWSSYLIQHKKTH). C2H2-type zinc fingers lie at residues 428–450 (YECD…ERTH), 456–478 (YECN…KRIH), 484–506 (YVCN…QRTH), 512–534 (FECT…MRMH), 540–562 (FKCD…ERTH), 568–590 (YKCT…QRTH), 596–618 (YNCQ…EIIH), 624–646 (YECN…QRTH), 652–674 (YECN…RRIH), 680–702 (YKCN…RRTH), 708–730 (YRCN…LRNH), 736–758 (YKCN…QRMH), and 764–786 (FICS…QRNH).

Belongs to the krueppel C2H2-type zinc-finger protein family. As to expression, widely expressed in adult and fetal tissues.

It is found in the nucleus. In terms of biological role, may act as a transcriptional repressor. The sequence is that of Zinc finger protein 606 (ZNF606) from Homo sapiens (Human).